The sequence spans 706 residues: 1,4-alpha-glucan-branching enzyme (706 aa).

The (1,4-alpha-D-glucosyl)n site is built by Trp-96 and Lys-133. Catalysis depends on Asp-358, which acts as the Nucleophile. Glu-419 serves as the catalytic Proton donor.

This sequence belongs to the glycosyl hydrolase 13 family. GlgB subfamily. As to quaternary structure, monomer.

Its subcellular location is the cytoplasm. It catalyses the reaction Transfers a segment of a (1-&gt;4)-alpha-D-glucan chain to a primary hydroxy group in a similar glucan chain.. It participates in glycan biosynthesis; glycogen biosynthesis. Its function is as follows. Glycogen-branching enzyme participates in the glycogen biosynthetic process along with glycogenin and glycogen synthase. Generates alpha-1,6-glucosidic branches from alpha-1,4-linked glucose chains, to increase solubility of the glycogen polymer. The chain is 1,4-alpha-glucan-branching enzyme (GLC3) from Candida glabrata (strain ATCC 2001 / BCRC 20586 / JCM 3761 / NBRC 0622 / NRRL Y-65 / CBS 138) (Yeast).